Here is a 185-residue protein sequence, read N- to C-terminus: Large ribosomal subunit protein uL18 (185 aa).

The protein belongs to the universal ribosomal protein uL18 family. In terms of assembly, part of the 50S ribosomal subunit. Contacts the 5S and 23S rRNAs.

This is one of the proteins that bind and probably mediate the attachment of the 5S RNA into the large ribosomal subunit, where it forms part of the central protuberance. The protein is Large ribosomal subunit protein uL18 of Halorubrum lacusprofundi (strain ATCC 49239 / DSM 5036 / JCM 8891 / ACAM 34).